The primary structure comprises 174 residues: MDPIDVTYHDEVGFLDDKNRNWQDWIMKLLLLAKKEIGKDNNLEMSINFVDEDRSHEINLKYRDKDRPTDVISFAIEDGEDAIDLSVFEDDPDFQEDIGDLFMCPSVIKRHSKEYGTGFDREFGYTVVHGFLHLNGYDHIKPDEAKEMFGIQGKVLEECGLPLYPDQLDEGRGK.

Residues histidine 129, histidine 133, and histidine 139 each contribute to the Zn(2+) site.

Belongs to the endoribonuclease YbeY family. The cofactor is Zn(2+).

The protein resides in the cytoplasm. Functionally, single strand-specific metallo-endoribonuclease involved in late-stage 70S ribosome quality control and in maturation of the 3' terminus of the 16S rRNA. The protein is Endoribonuclease YbeY of Lactobacillus helveticus (strain DPC 4571).